Consider the following 274-residue polypeptide: Elongation factor Ts (274 aa).

The interval 79–82 is involved in Mg(2+) ion dislocation from EF-Tu; sequence TDFV.

This sequence belongs to the EF-Ts family.

It localises to the cytoplasm. Its function is as follows. Associates with the EF-Tu.GDP complex and induces the exchange of GDP to GTP. It remains bound to the aminoacyl-tRNA.EF-Tu.GTP complex up to the GTP hydrolysis stage on the ribosome. The polypeptide is Elongation factor Ts (Azobacteroides pseudotrichonymphae genomovar. CFP2).